The primary structure comprises 706 residues: Polyribonucleotide nucleotidyltransferase (706 aa).

Residues Asp-486 and Asp-492 each contribute to the Mg(2+) site. The region spanning 552–611 (PRIIAMKINPEKIRDVIGKGGAVIRALTEETGTQIDIQEDGSVKIACTSMEAGELAKKRI) is the KH domain. The 69-residue stretch at 621 to 689 (GKVYEGPVIK…EKGRLRLSMK (69 aa)) folds into the S1 motif domain.

It belongs to the polyribonucleotide nucleotidyltransferase family. The cofactor is Mg(2+).

It localises to the cytoplasm. It catalyses the reaction RNA(n+1) + phosphate = RNA(n) + a ribonucleoside 5'-diphosphate. Involved in mRNA degradation. Catalyzes the phosphorolysis of single-stranded polyribonucleotides processively in the 3'- to 5'-direction. In Thiobacillus denitrificans (strain ATCC 25259 / T1), this protein is Polyribonucleotide nucleotidyltransferase.